The primary structure comprises 62 residues: Large ribosomal subunit protein bL33 (62 aa).

This sequence belongs to the bacterial ribosomal protein bL33 family.

The protein is Large ribosomal subunit protein bL33 of Porphyromonas gingivalis (strain ATCC 33277 / DSM 20709 / CIP 103683 / JCM 12257 / NCTC 11834 / 2561).